Reading from the N-terminus, the 261-residue chain is Homeobox protein ceh-33 (261 aa).

The segment at residues 133 to 192 (GEETSYCFRDKSRVLLRDWYCRNSYPSPREKRELAEKTHLTVTQVSNWFKNRRQRDRAGV) is a DNA-binding region (homeobox).

The protein belongs to the SIX/Sine oculis homeobox family.

The protein resides in the nucleus. The protein is Homeobox protein ceh-33 (ceh-33) of Caenorhabditis elegans.